Consider the following 144-residue polypeptide: 6-pyruvoyl tetrahydrobiopterin synthase (144 aa).

Residues 1 to 4 (MNAA) constitute a propeptide that is removed on maturation. A Phosphoserine modification is found at Ser18. Residue His23 coordinates Zn(2+). At Ser27 the chain carries Phosphoserine. Cys42 serves as the catalytic Proton acceptor. Zn(2+)-binding residues include His48 and His50. His89 (charge relay system) is an active-site residue. A Phosphotyrosine modification is found at Tyr127. Residue Glu133 is the Charge relay system of the active site.

This sequence belongs to the PTPS family. In terms of assembly, homohexamer formed of two homotrimers in a head to head fashion. Zn(2+) serves as cofactor. Post-translationally, phosphorylation of Ser-18 is required for maximal enzyme activity.

It catalyses the reaction 7,8-dihydroneopterin 3'-triphosphate = 6-pyruvoyl-5,6,7,8-tetrahydropterin + triphosphate + H(+). The protein operates within cofactor biosynthesis; tetrahydrobiopterin biosynthesis; tetrahydrobiopterin from 7,8-dihydroneopterin triphosphate: step 1/3. Involved in the biosynthesis of tetrahydrobiopterin, an essential cofactor of aromatic amino acid hydroxylases. Catalyzes the transformation of 7,8-dihydroneopterin triphosphate into 6-pyruvoyl tetrahydropterin. In Rattus norvegicus (Rat), this protein is 6-pyruvoyl tetrahydrobiopterin synthase (Pts).